The sequence spans 148 residues: Hemoglobin subunit beta-2 (148 aa).

One can recognise a Globin domain in the interval 3–148 (EWTDAERTAI…VVSALCRQYH (146 aa)). Heme b-binding residues include histidine 64 and histidine 93.

Heterotetramer of two alpha chains and two beta chains. In terms of tissue distribution, red blood cells.

In terms of biological role, involved in oxygen transport from gills to the various peripheral tissues. The chain is Hemoglobin subunit beta-2 (ba2) from Danio rerio (Zebrafish).